A 417-amino-acid polypeptide reads, in one-letter code: Envelope glycoprotein D (417 aa).

Residues 1-18 (MQGPTLAVLGALLAVAVS) form the signal peptide. The Virion surface segment spans residues 19–360 (LPTPAPRVTV…APATPAAPDA (342 aa)). Asparagine 41 and asparagine 102 each carry an N-linked (GlcNAc...) asparagine; by host glycan. 3 cysteine pairs are disulfide-bonded: cysteine 75/cysteine 197, cysteine 114/cysteine 213, and cysteine 126/cysteine 135. Residues 259–356 (EESKGYEPPP…HPPPAPATPA (98 aa)) form a disordered region. Positions 279–292 (GDDEAREDEGETED) are enriched in acidic residues. The helical transmembrane segment at 361–389 (VPVSVGIGIAAAAIACVAAAAAGAYFVYT) threads the bilayer. Topologically, residues 390–417 (RRRGAGPLPRKPKKLPAFGNVNYSALPG) are intravirion.

The protein belongs to the herpesviridae glycoprotein D family.

The protein resides in the virion membrane. In terms of biological role, envelope glycoprotein that binds to host cell entry receptors, promoting the virus entry into host cells. May trigger fusion with host membrane, by recruiting the fusion machinery composed of gB and gH/gL. The protein is Envelope glycoprotein D (gD) of Bovine herpesvirus 1.1 (strain Cooper) (BoHV-1).